Here is a 334-residue protein sequence, read N- to C-terminus: Ferrochelatase (334 aa).

2 residues coordinate Fe cation: H207 and E288.

The protein belongs to the ferrochelatase family.

The protein localises to the cytoplasm. The catalysed reaction is heme b + 2 H(+) = protoporphyrin IX + Fe(2+). The protein operates within porphyrin-containing compound metabolism; protoheme biosynthesis; protoheme from protoporphyrin-IX: step 1/1. Catalyzes the ferrous insertion into protoporphyrin IX. This is Ferrochelatase from Helicobacter pylori (strain P12).